The chain runs to 561 residues: DNA mismatch repair protein MutL (561 aa).

This sequence belongs to the DNA mismatch repair MutL/HexB family.

This protein is involved in the repair of mismatches in DNA. It is required for dam-dependent methyl-directed DNA mismatch repair. May act as a 'molecular matchmaker', a protein that promotes the formation of a stable complex between two or more DNA-binding proteins in an ATP-dependent manner without itself being part of a final effector complex. The chain is DNA mismatch repair protein MutL from Rippkaea orientalis (strain PCC 8801 / RF-1) (Cyanothece sp. (strain PCC 8801)).